A 182-amino-acid chain; its full sequence is Ribulose bisphosphate carboxylase small subunit, chloroplastic 4 (182 aa).

The N-terminal 41 residues, 1-41 (MSAAMMNKSVVLSKQCTKPAATPKVVTSKRSFASTVANKNR), are a transit peptide targeting the chloroplast.

It belongs to the RuBisCO small chain family. In terms of assembly, heterohexadecamer of 8 large and 8 small subunits.

It localises to the plastid. The protein resides in the chloroplast. RuBisCO catalyzes two reactions: the carboxylation of D-ribulose 1,5-bisphosphate, the primary event in carbon dioxide fixation, as well as the oxidative fragmentation of the pentose substrate. Both reactions occur simultaneously and in competition at the same active site. Although the small subunit is not catalytic it is essential for maximal activity. The protein is Ribulose bisphosphate carboxylase small subunit, chloroplastic 4 of Acetabularia acetabulum (Mermaid's wine glass).